The chain runs to 107 residues: U-scoloptoxin(18)-Er1a (107 aa).

An N-terminal signal peptide occupies residues 1-21 (MQRFLCLVACSVVLLVLGIVA).

Belongs to the scoloptoxin-18 family. In terms of processing, contains 5 disulfide bonds. Expressed by the venom gland.

The protein resides in the secreted. The polypeptide is U-scoloptoxin(18)-Er1a (Ethmostigmus rubripes (Giant centipede)).